Here is a 78-residue protein sequence, read N- to C-terminus: MKLTCVVIVAVLLLTACQLITADDSRGTQKHRSLRSTTKVSKATDCIEAGNYCGPTVMKICCGFCSPYSKICMNYPKN.

An N-terminal signal peptide occupies residues 1–22 (MKLTCVVIVAVLLLTACQLITA). Positions 23-42 (DDSRGTQKHRSLRSTTKVSK) are excised as a propeptide. Cystine bridges form between C46/C62, C53/C65, and C61/C72.

This sequence belongs to the conotoxin O1 superfamily. In terms of tissue distribution, expressed by the venom duct.

It localises to the secreted. Functionally, omega-conotoxins act at presynaptic membranes, they bind and block voltage-gated calcium channels (Cav). In Conus striatus (Striated cone), this protein is Omega-conotoxin-like 12.